The sequence spans 82 residues: Small ribosomal subunit protein bS16 (82 aa).

The protein belongs to the bacterial ribosomal protein bS16 family.

In Aliivibrio fischeri (strain ATCC 700601 / ES114) (Vibrio fischeri), this protein is Small ribosomal subunit protein bS16.